Consider the following 408-residue polypeptide: LL-diaminopimelate aminotransferase (408 aa).

2 residues coordinate substrate: Tyr-15 and Gly-42. Pyridoxal 5'-phosphate contacts are provided by residues Tyr-72, 108 to 109 (SK), Tyr-132, Asn-187, Tyr-218, and 246 to 248 (SFS). Substrate contacts are provided by Lys-109, Tyr-132, and Asn-187. Lys-249 carries the post-translational modification N6-(pyridoxal phosphate)lysine. Arg-257 and Asn-292 together coordinate pyridoxal 5'-phosphate. Substrate is bound by residues Asn-292 and Arg-388.

This sequence belongs to the class-I pyridoxal-phosphate-dependent aminotransferase family. LL-diaminopimelate aminotransferase subfamily. As to quaternary structure, homodimer. It depends on pyridoxal 5'-phosphate as a cofactor.

It carries out the reaction (2S,6S)-2,6-diaminopimelate + 2-oxoglutarate = (S)-2,3,4,5-tetrahydrodipicolinate + L-glutamate + H2O + H(+). The protein operates within amino-acid biosynthesis; L-lysine biosynthesis via DAP pathway; LL-2,6-diaminopimelate from (S)-tetrahydrodipicolinate (aminotransferase route): step 1/1. Involved in the synthesis of meso-diaminopimelate (m-DAP or DL-DAP), required for both lysine and peptidoglycan biosynthesis. Catalyzes the direct conversion of tetrahydrodipicolinate to LL-diaminopimelate. Is also able to catalyze the reverse reaction in vitro, i.e. the transamination of LL-diaminopimelate with 2-oxoglutarate to produce tetrahydrodipicolinate and glutamate. Cannot use m-DAP, lysine or ornithine as the amino-group donor, when using 2-oxoglutarate as the amino-group acceptor. Cannot use pyruvate, indole 3-pyruvate, oxaloacetate or phenyl pyruvate as the amino-group acceptor, when using LL-DAP as the amino-group donor. This is LL-diaminopimelate aminotransferase from Leptospira interrogans serogroup Icterohaemorrhagiae serovar copenhageni (strain Fiocruz L1-130).